We begin with the raw amino-acid sequence, 300 residues long: Protoheme IX farnesyltransferase 1 (300 aa).

Transmembrane regions (helical) follow at residues 28–48 (VVAL…PGAV), 50–70 (VQPL…AAAY), 106–126 (AMAI…TAWL), 150–170 (IVVG…AITG), 176–196 (ALLL…ALAI), 222–242 (CIML…LVGM), 243–263 (CGPL…YKAW), and 280–300 (FSIY…YLWS).

It belongs to the UbiA prenyltransferase family. Protoheme IX farnesyltransferase subfamily.

It is found in the cell inner membrane. It catalyses the reaction heme b + (2E,6E)-farnesyl diphosphate + H2O = Fe(II)-heme o + diphosphate. It functions in the pathway porphyrin-containing compound metabolism; heme O biosynthesis; heme O from protoheme: step 1/1. Converts heme B (protoheme IX) to heme O by substitution of the vinyl group on carbon 2 of heme B porphyrin ring with a hydroxyethyl farnesyl side group. This chain is Protoheme IX farnesyltransferase 1, found in Shewanella loihica (strain ATCC BAA-1088 / PV-4).